The chain runs to 101 residues: Apolipoprotein C-II (101 aa).

The N-terminal stretch at 1–22 is a signal peptide; that stretch reads MGTRFLLALFLVLLVLGLEVQA. Positions 66–74 are lipid binding; sequence AVDERIRDM. Residues 78–101 are lipoprotein lipase cofactor; sequence STAAVTTYAGIFTDQLFSMLKGEQ.

Belongs to the apolipoprotein C2 family. Proapolipoprotein C-II is synthesized as a sialic acid containing glycoprotein which is subsequently desialylated prior to its proteolytic processing. In terms of processing, proapolipoprotein C-II, the major form found in plasma undergoes proteolytic cleavage of its N-terminal hexapeptide to generate apolipoprotein C-II, which occurs as the minor form in plasma.

The protein resides in the secreted. Functionally, component of chylomicrons, very low-density lipoproteins (VLDL), low-density lipoproteins (LDL), and high-density lipoproteins (HDL) in plasma. Plays an important role in lipoprotein metabolism as an activator of lipoprotein lipase. Both proapolipoprotein C-II and apolipoprotein C-II can activate lipoprotein lipase. This is Apolipoprotein C-II (APOC2) from Tupaia glis (Common tree shrew).